Reading from the N-terminus, the 729-residue chain is Hydroxamate siderophore receptor FhuE (729 aa).

The signal sequence occupies residues 1–36 (MLSTQFNRDNQYQAITKPSLLAGCIALALLPSAAFA). A TonB box motif is present at residues 42–49 (ETVIVEGS). Positions 48-72 (GSATAPDDGENDYSVTSTSAGTKMQ) are disordered. Polar residues predominate over residues 60 to 72 (YSVTSTSAGTKMQ). Residues 74-183 (TQRDIPQSVT…PSAAINMVRK (110 aa)) form the TBDR plug domain. Fe(III)-coprogen contacts are provided by Arg117, Arg142, Trp275, Tyr357, Asn373, and Trp416. The 541-residue stretch at 189–729 (EFKGDVSAEY…NFSITGTYQF (541 aa)) folds into the TBDR beta-barrel domain. The TonB C-terminal box motif lies at 712–729 (SIVYGTPRNFSITGTYQF).

It belongs to the TonB-dependent receptor family.

It localises to the cell outer membrane. In terms of biological role, involved in the active transport across the outer membrane of iron complexed with linear hydroxamate siderophores coprogen, rhodotorulic acid and ferrioxamine B. Binds Fe-coprogen with high affinity, rhodotorulic acid to a lesser extent, and weakly to ferrioxamine B. Selective for planar siderophores. Does not use cyclic siderophores ferrichrome nor ferrioxamine E as substrates. The polypeptide is Hydroxamate siderophore receptor FhuE (Escherichia coli (strain K12)).